The sequence spans 486 residues: MKSLDQLVFDNRFARLGDAFSTQVLPDPIADPRLVVASEAAMALLDLDPAQADLPVFAELFSGHKLWEEADPRAMVYSGHQFGSYNPRLGDGRGLLLGEVVNDAGEHWDLHLKGAGQTPYSRMGDGRAVLRSSIREFLASEALHALGIPSSRALCVIGSSATVWRETRETAAMLLRLAHSHVRFGHFEYFYYTQQPEQQRLLIDHVLEQHYPECREAEQPYLAMFRTIVERNAELIARWQAYGFCHGVMNTDNMSILGITFDFGPYAFLDDFDANFICNHSDDRGRYSYANQVPIAHWNLSALAQALTTVIEVEPLKEALGLFLPLYQAHYLDLMRRRLGLTTAEDDDMALVERLLQRMQSGGVDYTLFFRKLGERPVAEALKVVRDDFVDLAGFDAWGVEYLARCEREPGNAEGRRERMQAVNPLYVLRNYLAQKAIEAAEAGDYSEVRRLHQVLSRPFEEQPGMQAYAERPPEWGKHLEISCSS.

8 residues coordinate ATP: Gly90, Gly92, Arg93, Lys113, Asp125, Gly126, Arg176, and Arg183. The Proton acceptor role is filled by Asp252. Mg(2+)-binding residues include Asn253 and Asp262. Position 262 (Asp262) interacts with ATP.

The protein belongs to the SELO family. It depends on Mg(2+) as a cofactor. Requires Mn(2+) as cofactor.

It catalyses the reaction L-seryl-[protein] + ATP = 3-O-(5'-adenylyl)-L-seryl-[protein] + diphosphate. The enzyme catalyses L-threonyl-[protein] + ATP = 3-O-(5'-adenylyl)-L-threonyl-[protein] + diphosphate. The catalysed reaction is L-tyrosyl-[protein] + ATP = O-(5'-adenylyl)-L-tyrosyl-[protein] + diphosphate. It carries out the reaction L-histidyl-[protein] + UTP = N(tele)-(5'-uridylyl)-L-histidyl-[protein] + diphosphate. It catalyses the reaction L-seryl-[protein] + UTP = O-(5'-uridylyl)-L-seryl-[protein] + diphosphate. The enzyme catalyses L-tyrosyl-[protein] + UTP = O-(5'-uridylyl)-L-tyrosyl-[protein] + diphosphate. In terms of biological role, nucleotidyltransferase involved in the post-translational modification of proteins. It can catalyze the addition of adenosine monophosphate (AMP) or uridine monophosphate (UMP) to a protein, resulting in modifications known as AMPylation and UMPylation. The chain is Protein nucleotidyltransferase YdiU from Pseudomonas entomophila (strain L48).